We begin with the raw amino-acid sequence, 598 residues long: Elongation factor 4 (598 aa).

The 183-residue stretch at 4 to 186 (SHIRNFAIIA…AIVSRLPAPS (183 aa)) folds into the tr-type G domain. GTP-binding positions include 16–21 (DHGKST) and 133–136 (NKID).

The protein belongs to the TRAFAC class translation factor GTPase superfamily. Classic translation factor GTPase family. LepA subfamily.

The protein localises to the cell inner membrane. It carries out the reaction GTP + H2O = GDP + phosphate + H(+). Functionally, required for accurate and efficient protein synthesis under certain stress conditions. May act as a fidelity factor of the translation reaction, by catalyzing a one-codon backward translocation of tRNAs on improperly translocated ribosomes. Back-translocation proceeds from a post-translocation (POST) complex to a pre-translocation (PRE) complex, thus giving elongation factor G a second chance to translocate the tRNAs correctly. Binds to ribosomes in a GTP-dependent manner. This chain is Elongation factor 4, found in Ehrlichia chaffeensis (strain ATCC CRL-10679 / Arkansas).